Here is a 145-residue protein sequence, read N- to C-terminus: Nucleoside diphosphate kinase (145 aa).

Residues K11, F59, R87, T93, R104, and N114 each coordinate ATP. The active-site Pros-phosphohistidine intermediate is the H117.

It belongs to the NDK family. Requires Mg(2+) as cofactor.

The protein resides in the cytoplasm. It carries out the reaction a 2'-deoxyribonucleoside 5'-diphosphate + ATP = a 2'-deoxyribonucleoside 5'-triphosphate + ADP. The enzyme catalyses a ribonucleoside 5'-diphosphate + ATP = a ribonucleoside 5'-triphosphate + ADP. Its function is as follows. Major role in the synthesis of nucleoside triphosphates other than ATP. The ATP gamma phosphate is transferred to the NDP beta phosphate via a ping-pong mechanism, using a phosphorylated active-site intermediate. The sequence is that of Nucleoside diphosphate kinase from Sulfolobus acidocaldarius (strain ATCC 33909 / DSM 639 / JCM 8929 / NBRC 15157 / NCIMB 11770).